The sequence spans 137 residues: MIEGIYEVMPEKFNEALKSYLKSTNEVVPLQDHDIMKTGEGREQAPIEEDWYFTRMASIVRQISIKGAVTSEFLAKRYGSLKNRGCRPSKYVGAYPEIGESVLENLKNMGWINEHPKDMLTEKGKTIVREIIEKVRE.

This sequence belongs to the eukaryotic ribosomal protein eS19 family. Component of the small ribosomal subunit.

The protein localises to the cytoplasm. This chain is Small ribosomal subunit protein eS19 (RPS19), found in Encephalitozoon cuniculi (strain GB-M1) (Microsporidian parasite).